A 366-amino-acid chain; its full sequence is Dof zinc finger protein DOF1.3 (366 aa).

Positions 22–103 are disordered; sequence DPYSSSSHVL…KTTELKKPDK (82 aa). 2 stretches are compositionally biased toward low complexity: residues 25–45 and 56–69; these read SSSS…SLSL and TDNT…NLNN. 2 stretches are compositionally biased toward basic and acidic residues: residues 70-83 and 91-103; these read ESKE…DQHS and EEEK…KPDK. The Dof-type zinc-finger motif lies at 105 to 159; the sequence is LPCPRCNSADTKFCYYNNYNVNQPRHFCRKCQRYWTAGGSMRIVPVGSGRRKNKG. Zn(2+)-binding residues include C107, C110, C132, and C135.

The protein resides in the nucleus. Its function is as follows. Transcription factor that binds specifically to a 5'-AA[AG]G-3' consensus core sequence. The chain is Dof zinc finger protein DOF1.3 (DOF1.3) from Arabidopsis thaliana (Mouse-ear cress).